The chain runs to 247 residues: 23S rRNA (guanosine-2'-O-)-methyltransferase RlmB (247 aa).

Glycine 197, isoleucine 217, and leucine 226 together coordinate S-adenosyl-L-methionine.

The protein belongs to the class IV-like SAM-binding methyltransferase superfamily. RNA methyltransferase TrmH family. RlmB subfamily.

The protein resides in the cytoplasm. It catalyses the reaction guanosine(2251) in 23S rRNA + S-adenosyl-L-methionine = 2'-O-methylguanosine(2251) in 23S rRNA + S-adenosyl-L-homocysteine + H(+). Specifically methylates the ribose of guanosine 2251 in 23S rRNA. The polypeptide is 23S rRNA (guanosine-2'-O-)-methyltransferase RlmB (Vibrio vulnificus (strain CMCP6)).